We begin with the raw amino-acid sequence, 299 residues long: Probable adenylate kinase 7, mitochondrial (299 aa).

A mitochondrion-targeting transit peptide spans 1 to 25 (MAGVLRLAGAARSPLARALAPAARR). An ATP-binding site is contributed by 80 to 85 (GPQKHA). The NMP stretch occupies residues 100 to 129 (SMGTLVRQELSPASSLYKKIANSVNEGKLV). AMP contacts are provided by residues arginine 106, 127 to 129 (KLV), 157 to 160 (GIPR), and glutamine 164. ATP-binding positions include arginine 190 and 203–204 (LF). The segment at 193–237 (GGDICPHCGQLFDFSKTASSDRNPSLGSCTWPSQVQHAAVLGLED) is LID.

Belongs to the adenylate kinase family.

It is found in the mitochondrion. It carries out the reaction AMP + ATP = 2 ADP. In terms of biological role, catalyzes the reversible transfer of the terminal phosphate group between ATP and AMP. Plays an important role in cellular energy homeostasis and in adenine nucleotide metabolism. This is Probable adenylate kinase 7, mitochondrial from Oryza sativa subsp. japonica (Rice).